The primary structure comprises 177 residues: Putative adenylate kinase (177 aa).

ATP-binding residues include Gly10, Gly12, Lys13, Thr14, and Thr15. Residues 30 to 50 form an NMP region; it reads SLRDYAIEKGIGEMKGDELEV. Positions 99 to 109 are LID; it reads ERGYSREKVGE. Positions 100 and 138 each coordinate ATP.

The protein belongs to the adenylate kinase family. AK6 subfamily. Interacts with uS11. Not a structural component of 40S pre-ribosomes, but transiently interacts with them by binding to uS11.

It carries out the reaction AMP + ATP = 2 ADP. The catalysed reaction is ATP + H2O = ADP + phosphate + H(+). Functionally, broad-specificity nucleoside monophosphate (NMP) kinase that catalyzes the reversible transfer of the terminal phosphate group between nucleoside triphosphates and monophosphates. Also has ATPase activity. Involved in the late maturation steps of the 30S ribosomal particles, specifically 16S rRNA maturation. While NMP activity is not required for ribosome maturation, ATPase activity is. Associates transiently with small ribosomal subunit protein uS11. ATP hydrolysis breaks the interaction with uS11. May temporarily remove uS11 from the ribosome to enable a conformational change of the ribosomal RNA that is needed for the final maturation step of the small ribosomal subunit. This chain is Putative adenylate kinase, found in Thermococcus gammatolerans (strain DSM 15229 / JCM 11827 / EJ3).